Here is a 346-residue protein sequence, read N- to C-terminus: MIKVGIVGGTGYTGVELLRILASHPQAEVTVITSRAEAGRQVSELFPNLRGHYDLAFSEPSKEVLLECDVIFFATPHGVAQAMMAELIEGGARVIDLSADFRIRDIATWEKWYGQKHGCPDLVASAVYGLPEVNREKIKSAQLIACPGCYPTSIQLGFLPLLEKGLIDVSSLIANSASGTTGAGKQASVPNLFSEASDSFKAYGAAGHRHLPEIEQGLVDIGGEHANGLSLTFVPHLLPTIRGIHSTLYAKLKGDAGDLQALYEQRYANEPFVDVLPKGDFPQTRTVKSTNMCRISVIEPQERGTVVIMSVIDNLTKGASGQGVQNMNIMFGLDENMGMSSPAILP.

Residue Cys149 is part of the active site.

The protein belongs to the NAGSA dehydrogenase family. Type 1 subfamily.

It localises to the cytoplasm. It catalyses the reaction N-acetyl-L-glutamate 5-semialdehyde + phosphate + NADP(+) = N-acetyl-L-glutamyl 5-phosphate + NADPH + H(+). It functions in the pathway amino-acid biosynthesis; L-arginine biosynthesis; N(2)-acetyl-L-ornithine from L-glutamate: step 3/4. Functionally, catalyzes the NADPH-dependent reduction of N-acetyl-5-glutamyl phosphate to yield N-acetyl-L-glutamate 5-semialdehyde. This chain is N-acetyl-gamma-glutamyl-phosphate reductase, found in Saccharophagus degradans (strain 2-40 / ATCC 43961 / DSM 17024).